The sequence spans 250 residues: ATP synthase subunit a (250 aa).

The next 6 membrane-spanning stretches (helical) occupy residues 26 to 46 (FTNA…FLYL), 84 to 104 (FFPM…LGMF), 114 to 134 (IIVT…YGFY), 143 to 163 (LFVP…IEVI), 193 to 213 (FVAS…LPLI), and 216 to 236 (VALT…FAVL).

The protein belongs to the ATPase A chain family. In terms of assembly, F-type ATPases have 2 components, CF(1) - the catalytic core - and CF(0) - the membrane proton channel. CF(1) has five subunits: alpha(3), beta(3), gamma(1), delta(1), epsilon(1). CF(0) has three main subunits: a(1), b(2) and c(9-12). The alpha and beta chains form an alternating ring which encloses part of the gamma chain. CF(1) is attached to CF(0) by a central stalk formed by the gamma and epsilon chains, while a peripheral stalk is formed by the delta and b chains.

It localises to the cell inner membrane. Its function is as follows. Key component of the proton channel; it plays a direct role in the translocation of protons across the membrane. This is ATP synthase subunit a from Sinorhizobium fredii (strain NBRC 101917 / NGR234).